The chain runs to 524 residues: Anthranilate synthase component 1 (524 aa).

Positions 1 to 16 are enriched in polar residues; the sequence is MQTTANHSSRSTQTGT. A disordered region spans residues 1-25; sequence MQTTANHSSRSTQTGTRAHGAALAE. Residues S74 and 298 to 300 contribute to the L-tryptophan site; that span reads PYM. Residue 339-340 coordinates chorismate; the sequence is GT. An Isoglutamyl lysine isopeptide (Lys-Gln) (interchain with Q-Cter in protein Pup) cross-link involves residue K355. Residue E366 participates in Mg(2+) binding. Residues Y454, R474, 488–490, and G490 each bind chorismate; that span reads GGG. E503 contacts Mg(2+).

This sequence belongs to the anthranilate synthase component I family. In terms of assembly, heterotetramer consisting of two non-identical subunits: a beta subunit (TrpG) and a large alpha subunit (TrpE). The cofactor is Mg(2+).

The catalysed reaction is chorismate + L-glutamine = anthranilate + pyruvate + L-glutamate + H(+). It functions in the pathway amino-acid biosynthesis; L-tryptophan biosynthesis; L-tryptophan from chorismate: step 1/5. Feedback inhibited by tryptophan. Its function is as follows. Part of a heterotetrameric complex that catalyzes the two-step biosynthesis of anthranilate, an intermediate in the biosynthesis of L-tryptophan. In the first step, the glutamine-binding beta subunit (TrpG) of anthranilate synthase (AS) provides the glutamine amidotransferase activity which generates ammonia as a substrate that, along with chorismate, is used in the second step, catalyzed by the large alpha subunit of AS (TrpE) to produce anthranilate. In the absence of TrpG, TrpE can synthesize anthranilate directly from chorismate and high concentrations of ammonia. In Mycolicibacterium smegmatis (strain ATCC 700084 / mc(2)155) (Mycobacterium smegmatis), this protein is Anthranilate synthase component 1 (trpE).